Consider the following 254-residue polypeptide: Chaperone protein PmfD (254 aa).

Residues 1–26 (MNSFSTLKTLFCGSLLALSLVNTTQA) form the signal peptide.

The protein belongs to the periplasmic pilus chaperone family.

It is found in the periplasm. Involved in the biogenesis of the PMF fimbria. The sequence is that of Chaperone protein PmfD (pmfD) from Proteus mirabilis (strain HI4320).